The primary structure comprises 277 residues: Zaragozic acid A biosynthesis cluster protein 1 (277 aa).

It functions in the pathway secondary metabolite biosynthesis. In terms of biological role, part of the gene cluster that mediates the biosynthesis of squalestatin S1 (SQS1, also known as zaragozic acid A), a heavily oxidized fungal polyketide that offers potent cholesterol lowering activity by targeting squalene synthase (SS). SQS1 is composed of a 2,8-dioxobicyclic[3.2.1]octane-3,4,5-tricarboxyclic acid core that is connected to two lipophilic polyketide arms. These initial steps feature the priming of an unusual benzoic acid starter unit onto the highly reducing polyketide synthase clz14, followed by oxaloacetate extension and product release to generate a tricarboxylic acid containing product. The phenylalanine ammonia lyase (PAL) clz10 and the acyl-CoA ligase clz12 are involved in transforming phenylalanine into benzoyl-CoA. The citrate synthase-like protein clz17 is involved in connecting the C-alpha-carbons of the hexaketide chain and oxaloacetate to afford the tricarboxylic acid unit. The potential hydrolytic enzymes, clz11 and clz13, are in close proximity to pks2 and may participate in product release. On the other side, the tetraketide arm is synthesized by a the squalestatin tetraketide synthase clz2 and enzymatically esterified to the core in the last biosynthetic step, by the acetyltransferase clz6. The biosynthesis of the tetraketide must involve 3 rounds of chain extension. After the first and second rounds methyl-transfer occurs, and in all rounds of extension the ketoreductase and dehydratase are active. The enoyl reductase and C-MeT of clz2 are not active in the final round of extension. The acetyltransferase clz6 appears to have a broad substrate selectivity for its acyl CoA substrate, allowing the in vitro synthesis of novel squalestatins. The biosynthesis of SQS1 requires several oxidative steps likely performed by oxidoreductases clz3, clz15 and clz16. Finally, in support of the identification of the cluster as being responsible for SQS1 production, the cluster contains a gene encoding a putative squalene synthase (SS) clz20, suggesting a likely mechanism for self-resistance. The protein is Zaragozic acid A biosynthesis cluster protein 1 of Cochliobolus lunatus (Filamentous fungus).